Consider the following 265-residue polypeptide: MALRDIFLLSMAMTAVTVQACPSACKCTVSLYGEMVVACGGMGLTEIPEDIPHRAVYLVLKDNNITKITSYSFKGLRNLQGIDLSNNKINHISSAALRHLGHLDDIDLSRNELTSVSEKLFDFPISSAKAQGRRFFVYLANNPWGCDCRMAWLAQELAGGSKTFGDRHMECATPAALAGRGLSEIPQTSFVCTGRDISFDSDGIIATPEESTAFPVAYKVAVVFGCITGLVTILLLVLTAMLYQKRRIRLGSKYELRWNKHPEFV.

Positions 1 to 20 (MALRDIFLLSMAMTAVTVQA) are cleaved as a signal peptide. Disulfide bonds link Cys21-Cys27 and Cys25-Cys39. One can recognise an LRRNT domain in the interval 21-50 (CPSACKCTVSLYGEMVVACGGMGLTEIPED). 3 LRR repeats span residues 51–75 (IPHR…SFKG), 76–99 (LRNL…ALRH), and 100–123 (LGHL…LFDF). Asn64 carries an N-linked (GlcNAc...) asparagine glycan. Residues 142–193 (NPWGCDCRMAWLAQELAGGSKTFGDRHMECATPAALAGRGLSEIPQTSFVCT) enclose the LRRCT domain. 2 disulfides stabilise this stretch: Cys146-Cys171 and Cys148-Cys192. Residues 220 to 240 (VAVVFGCITGLVTILLLVLTA) form a helical membrane-spanning segment.

The protein localises to the cell membrane. Binds selectively to the Gram-positive bacteria S.aureus and S.pneumoniae. Does not adhere to the Gram-negative bacteria E.coli and S.enterica. Probably recognizes peptidoglycans expressed on the bacterial cell surface. The chain is Leucine-rich repeat-containing protein Bf66946 from Branchiostoma floridae (Florida lancelet).